We begin with the raw amino-acid sequence, 224 residues long: UPF0758 protein VF_0126 (224 aa).

An MPN domain is found at A102 to I224. Zn(2+) contacts are provided by H173, H175, and D186. A JAMM motif motif is present at residues H173–D186.

It belongs to the UPF0758 family.

The protein is UPF0758 protein VF_0126 of Aliivibrio fischeri (strain ATCC 700601 / ES114) (Vibrio fischeri).